We begin with the raw amino-acid sequence, 145 residues long: D-aminoacyl-tRNA deacylase (145 aa).

Residues 137-138 (GP) carry the Gly-cisPro motif, important for rejection of L-amino acids motif.

It belongs to the DTD family. In terms of assembly, homodimer.

It is found in the cytoplasm. The enzyme catalyses glycyl-tRNA(Ala) + H2O = tRNA(Ala) + glycine + H(+). It catalyses the reaction a D-aminoacyl-tRNA + H2O = a tRNA + a D-alpha-amino acid + H(+). Functionally, an aminoacyl-tRNA editing enzyme that deacylates mischarged D-aminoacyl-tRNAs. Also deacylates mischarged glycyl-tRNA(Ala), protecting cells against glycine mischarging by AlaRS. Acts via tRNA-based rather than protein-based catalysis; rejects L-amino acids rather than detecting D-amino acids in the active site. By recycling D-aminoacyl-tRNA to D-amino acids and free tRNA molecules, this enzyme counteracts the toxicity associated with the formation of D-aminoacyl-tRNA entities in vivo and helps enforce protein L-homochirality. This Aeromonas hydrophila subsp. hydrophila (strain ATCC 7966 / DSM 30187 / BCRC 13018 / CCUG 14551 / JCM 1027 / KCTC 2358 / NCIMB 9240 / NCTC 8049) protein is D-aminoacyl-tRNA deacylase.